A 223-amino-acid chain; its full sequence is MKRKRYEMEKKKKTEIQTAIEELSVFIVTKPADKTEATHIPLRPILSFCSLIIQVLDKIGPTMAVLRQDIDQNIQRLEKFYETDSCVYSNLAEILKKEKEEGTSKMVASCGRALFWLTRTMDFTAGLLRLLSKEMSSKMEELVEECYMTTLKPHHGWIASAAFKVCLKLVPDNKTFMEAIGARDESYDTLREDIDTLSSLLTPILKEIYFVLEQYGLSRLRSM.

Residues Asp69, Asn73, Trp116, and His155 each coordinate a ganglioside GM3 (d18:1(4E)).

The protein belongs to the GLTP family.

Functionally, transfers glycolipids in vitro. This chain is Glycolipid transfer protein 2, found in Arabidopsis thaliana (Mouse-ear cress).